The following is a 1396-amino-acid chain: ABC-type transporter cicA (1396 aa).

Residues Met-1–Gln-40 form a disordered region. The span at Thr-18–Ser-29 shows a compositional bias: low complexity. 3 helical membrane passes run Phe-142 to Leu-162, Gly-191 to Leu-211, and Met-300 to Val-320. An ABC transmembrane type-1 1 domain is found at Leu-143–Asp-466. A glycan (N-linked (GlcNAc...) asparagine) is linked at Asn-321. A run of 3 helical transmembrane segments spans residues Tyr-324–Val-344, Ile-409–Ala-429, and Ile-440–Val-460. Basic and acidic residues predominate over residues Ala-510 to Ala-533. A disordered region spans residues Ala-510–Pro-543. The 227-residue stretch at Arg-525–Thr-751 folds into the ABC transporter 1 domain. Gly-563–Ser-570 provides a ligand contact to ATP. Asn-604 carries an N-linked (GlcNAc...) asparagine glycan. The tract at residues Thr-751–Met-787 is disordered. Over residues Lys-757–Ala-771 the composition is skewed to acidic residues. 2 helical membrane-spanning segments follow: residues Leu-816–Leu-836 and Tyr-852–Thr-872. One can recognise an ABC transmembrane type-1 2 domain in the interval Leu-816–Asn-1093. Asn-880 carries an N-linked (GlcNAc...) asparagine glycan. 4 consecutive transmembrane segments (helical) span residues Met-930 to Val-947, Tyr-951 to Tyr-970, Leu-1036 to Val-1056, and Ser-1065 to Val-1085. N-linked (GlcNAc...) asparagine glycans are attached at residues Asn-1096, Asn-1150, and Asn-1154. The ABC transporter 2 domain maps to Ile-1131–Glu-1380. Gly-1165–Ser-1172 contributes to the ATP binding site.

It belongs to the ABC transporter superfamily. ABCC family. Conjugate transporter (TC 3.A.1.208) subfamily.

The protein localises to the cell membrane. ABC-type transporter; part of the gene cluster that mediates the biosynthesis of cichorine, a phytotoxin active against knapweed, corn, and soybeans. CicA is probably involved in the secretion of cichorine. In Emericella nidulans (strain FGSC A4 / ATCC 38163 / CBS 112.46 / NRRL 194 / M139) (Aspergillus nidulans), this protein is ABC-type transporter cicA.